The primary structure comprises 276 residues: Formamidopyrimidine-DNA glycosylase (276 aa).

P2 acts as the Schiff-base intermediate with DNA in catalysis. The Proton donor role is filled by E3. The active-site Proton donor; for beta-elimination activity is K60. DNA-binding residues include H93 and R112. The segment at 240-274 adopts an FPG-type zinc-finger fold; sequence NVYGKKGEPCVTCGTILEKTVVGGRGTHYCPICQP. R264 functions as the Proton donor; for delta-elimination activity in the catalytic mechanism.

This sequence belongs to the FPG family. As to quaternary structure, monomer. Zn(2+) is required as a cofactor.

The enzyme catalyses Hydrolysis of DNA containing ring-opened 7-methylguanine residues, releasing 2,6-diamino-4-hydroxy-5-(N-methyl)formamidopyrimidine.. It carries out the reaction 2'-deoxyribonucleotide-(2'-deoxyribose 5'-phosphate)-2'-deoxyribonucleotide-DNA = a 3'-end 2'-deoxyribonucleotide-(2,3-dehydro-2,3-deoxyribose 5'-phosphate)-DNA + a 5'-end 5'-phospho-2'-deoxyribonucleoside-DNA + H(+). In terms of biological role, involved in base excision repair of DNA damaged by oxidation or by mutagenic agents. Acts as a DNA glycosylase that recognizes and removes damaged bases. Has a preference for oxidized purines, such as 7,8-dihydro-8-oxoguanine (8-oxoG). Has AP (apurinic/apyrimidinic) lyase activity and introduces nicks in the DNA strand. Cleaves the DNA backbone by beta-delta elimination to generate a single-strand break at the site of the removed base with both 3'- and 5'-phosphates. The protein is Formamidopyrimidine-DNA glycosylase of Bacillus cereus (strain ATCC 10987 / NRS 248).